The following is a 444-amino-acid chain: MSEETATSDNDNSYARVRAVVMTRDDSSGGWLPLGGSGLSSVTVFKVPHQEENGCADFFIRGERLRDKMVVLECMLKKDLIYNKVTPTFHHWKIDDKKFGLTFQSPADARAFDRGIRRAIEDISQGCPESKNEAEGADDLQANEEDSSSSLVKDHLFQQETVVTSEPYRSSNIRPSPFEDLNARRVYMQSQANQITFGQPGLDIQSRSMEYVQRQISKECGSLKSQNRVPLKSIRHVSFQDEDEIVRINPRDILIRRYADYRHPDMWKNDLERDDADSSIQFSKPDSKKSDYLYSCGDETKLSSPKDSVVFKTQPSSLKIKKSKRRKEDGERSRCVYCQERFNHEENVRGKCQDAPDPIKRCIYQVSCMLCAESMLYHCMSDSEGDFSDPCSCDTSDDKFCLRWLALVALSFIVPCMCCYVPLRMCHRCGEACGCCGGKHKAAG.

Position 2 is an N-acetylserine (serine 2). Residues 6-123 (ATSDNDNSYA…RGIRRAIEDI (118 aa)) form the WH1 domain. Positions 123–151 (ISQGCPESKNEAEGADDLQANEEDSSSSL) are disordered. Residues 135–147 (EGADDLQANEEDS) are compositionally biased toward acidic residues. Lysine 224 is modified (N6-methyllysine). Residues 233–285 (SIRHVSFQDEDEIVRINPRDILIRRYADYRHPDMWKNDLERDDADSSIQFSKP) enclose the KBD domain. Serine 238 and serine 308 each carry phosphoserine. The segment at 333 to 444 (SRCVYCQERF…CCGGKHKAAG (112 aa)) is required for interaction with TESK1. An SPR domain is found at 334–442 (RCVYCQERFN…CGCCGGKHKA (109 aa)).

As to quaternary structure, homodimer and heterodimer. Able to interact with SPRED2 to form heterodimers. Interacts (via C-terminus) with TAOK1/MARKK (via C-terminus); the interaction does not affect TAOK1 kinase activity. Interacts (via C-terminus) with TESK1 (via C-terminus); the interaction inhibits TESK1 kinase activity. Interacts with CAV1. Interacts with RAS. Interacts with palmitoyltransferase ZDHHC17/HIP14; the interaction leads to palmitoylation of SPRED1. Palmitoylated by ZDHHC17/HIP14. In terms of processing, phosphorylated on tyrosine. Post-translationally, ubiquitinated. Weakly expressed in embryonic cell line HEK293.

Its subcellular location is the cell membrane. It is found in the membrane. The protein resides in the caveola. The protein localises to the nucleus. Tyrosine kinase substrate that inhibits growth-factor-mediated activation of MAP kinase. Negatively regulates hematopoiesis of bone marrow. Inhibits fibroblast growth factor (FGF)-induced retinal lens fiber differentiation, probably by inhibiting FGF-mediated phosphorylation of ERK1/2. Attenuates actin stress fiber formation via inhibition of TESK1-mediated phosphorylation of cofilin. Inhibits TGFB-induced epithelial-to-mesenchymal transition in lens epithelial cells. This chain is Sprouty-related, EVH1 domain-containing protein 1 (SPRED1), found in Homo sapiens (Human).